A 334-amino-acid polypeptide reads, in one-letter code: TPR repeat-containing protein YsoA (334 aa).

TPR repeat units lie at residues 17–50 (KDRL…DDTE), 52–84 (DLHL…GYGH), and 195–230 (HPII…EPSE).

The sequence is that of TPR repeat-containing protein YsoA (ysoA) from Bacillus subtilis (strain 168).